Consider the following 1755-residue polypeptide: Transposon Ty1-ML2 Gag-Pol polyprotein (1755 aa).

Low complexity predominate over residues 1-16; it reads MESQQLSQHSHISHGS. 3 disordered regions span residues 1-93, 126-173, and 352-421; these read MESQ…MMTQ, PQSQ…RPPP, and GSRN…SKST. Polar residues-rich tracts occupy residues 48-60 and 127-152; these read TKAN…TPAS and QSQF…GNTF. Over residues 153–165 the composition is skewed to low complexity; that stretch reads TDSSSADSDMTST. The tract at residues 299 to 401 is RNA-binding; that stretch reads NNGIHINNKV…NSKSKTARAH (103 aa). The segment covering 402–418 has biased composition (low complexity); the sequence is NVSTSNNSPSTDNDSIS. Serine 416 is subject to Phosphoserine. The For protease activity; shared with dimeric partner role is filled by aspartate 461. The segment at 583–640 is integrase-type zinc finger-like; the sequence is NVHTSESTRKYPYPFIHRMLAHANAQTIRYSLKNNTITYFNESDVDRSSAIDYQCPDC. The 176-residue stretch at 660–835 folds into the Integrase catalytic domain; it reads NSYEPFQYLH…AGLDISTLLP (176 aa). Mg(2+) is bound by residues aspartate 671 and aspartate 736. Disordered stretches follow at residues 956 to 1087, 1092 to 1111, and 1130 to 1171; these read SKAV…ETEK, RSPS…NIVP, and DLPL…DSNA. Over residues 960-969 the composition is skewed to low complexity; that stretch reads SPTDSTPPST. Polar residues predominate over residues 1005–1015; that stretch reads STPQISNIEST. The span at 1038–1053 shows a compositional bias: basic and acidic residues; sequence ESSHASKSKDFRHSDS. Composition is skewed to polar residues over residues 1054–1082 and 1101–1111; these read YSEN…QISD and PENNSSHNIVP. The Bipartite nuclear localization signal motif lies at 1178-1212; that stretch reads KKRSLEDNETEIKVSRDTWNTKNMRSLEPPRSKKR. The Reverse transcriptase Ty1/copia-type domain maps to 1338–1476; sequence NNYYITQLDI…DILGLEIKYQ (139 aa). 6 residues coordinate Mg(2+): aspartate 1346, aspartate 1427, aspartate 1428, aspartate 1610, glutamate 1652, and aspartate 1685. The 143-residue stretch at 1610 to 1752 folds into the RNase H Ty1/copia-type domain; the sequence is DASYGNQPYY…IKTFKLLTNK (143 aa).

The capsid protein forms a homotrimer, from which the VLPs are assembled. The protease is a homodimer, whose active site consists of two apposed aspartic acid residues. Initially, virus-like particles (VLPs) are composed of the structural unprocessed proteins Gag and Gag-Pol, and also contain the host initiator methionine tRNA (tRNA(i)-Met) which serves as a primer for minus-strand DNA synthesis, and a dimer of genomic Ty RNA. Processing of the polyproteins occurs within the particle and proceeds by an ordered pathway, called maturation. First, the protease (PR) is released by autocatalytic cleavage of the Gag-Pol polyprotein yielding capsid protein p45 and a Pol-p154 precursor protein. This cleavage is a prerequisite for subsequent processing of Pol-p154 at the remaining sites to release the mature structural and catalytic proteins. Maturation takes place prior to the RT reaction and is required to produce transposition-competent VLPs.

It is found in the cytoplasm. The protein resides in the nucleus. It catalyses the reaction DNA(n) + a 2'-deoxyribonucleoside 5'-triphosphate = DNA(n+1) + diphosphate. It carries out the reaction Endonucleolytic cleavage to 5'-phosphomonoester.. Functionally, capsid protein (CA) is the structural component of the virus-like particle (VLP), forming the shell that encapsulates the retrotransposons dimeric RNA genome. The particles are assembled from trimer-clustered units and there are holes in the capsid shells that allow for the diffusion of macromolecules. CA also has nucleocapsid-like chaperone activity, promoting primer tRNA(i)-Met annealing to the multipartite primer-binding site (PBS), dimerization of Ty1 RNA and initiation of reverse transcription. The aspartyl protease (PR) mediates the proteolytic cleavages of the Gag and Gag-Pol polyproteins after assembly of the VLP. In terms of biological role, reverse transcriptase/ribonuclease H (RT) is a multifunctional enzyme that catalyzes the conversion of the retro-elements RNA genome into dsDNA within the VLP. The enzyme displays a DNA polymerase activity that can copy either DNA or RNA templates, and a ribonuclease H (RNase H) activity that cleaves the RNA strand of RNA-DNA heteroduplexes during plus-strand synthesis and hydrolyzes RNA primers. The conversion leads to a linear dsDNA copy of the retrotransposon that includes long terminal repeats (LTRs) at both ends. Its function is as follows. Integrase (IN) targets the VLP to the nucleus, where a subparticle preintegration complex (PIC) containing at least integrase and the newly synthesized dsDNA copy of the retrotransposon must transit the nuclear membrane. Once in the nucleus, integrase performs the integration of the dsDNA into the host genome. The protein is Transposon Ty1-ML2 Gag-Pol polyprotein (TY1B-ML2) of Saccharomyces cerevisiae (strain ATCC 204508 / S288c) (Baker's yeast).